Reading from the N-terminus, the 353-residue chain is Mannonate dehydratase (353 aa).

It belongs to the mannonate dehydratase family. Requires Fe(2+) as cofactor. Mn(2+) is required as a cofactor.

The catalysed reaction is D-mannonate = 2-dehydro-3-deoxy-D-gluconate + H2O. The protein operates within carbohydrate metabolism; pentose and glucuronate interconversion. In terms of biological role, catalyzes the dehydration of D-mannonate. This chain is Mannonate dehydratase, found in Burkholderia cenocepacia (strain ATCC BAA-245 / DSM 16553 / LMG 16656 / NCTC 13227 / J2315 / CF5610) (Burkholderia cepacia (strain J2315)).